Here is a 130-residue protein sequence, read N- to C-terminus: Small ribosomal subunit protein uS9 (130 aa).

The protein belongs to the universal ribosomal protein uS9 family.

The polypeptide is Small ribosomal subunit protein uS9 (Vibrio vulnificus (strain CMCP6)).